Consider the following 184-residue polypeptide: Pyridoxal 5'-phosphate synthase subunit PdxT (184 aa).

Position 46-48 (46-48) interacts with L-glutamine; sequence GES. Residue C75 is the Nucleophile of the active site. L-glutamine-binding positions include R101 and 129–130; that span reads IR. Catalysis depends on charge relay system residues H165 and E167.

Belongs to the glutaminase PdxT/SNO family. In terms of assembly, in the presence of PdxS, forms a dodecamer of heterodimers. Only shows activity in the heterodimer.

The enzyme catalyses aldehydo-D-ribose 5-phosphate + D-glyceraldehyde 3-phosphate + L-glutamine = pyridoxal 5'-phosphate + L-glutamate + phosphate + 3 H2O + H(+). The catalysed reaction is L-glutamine + H2O = L-glutamate + NH4(+). It functions in the pathway cofactor biosynthesis; pyridoxal 5'-phosphate biosynthesis. In terms of biological role, catalyzes the hydrolysis of glutamine to glutamate and ammonia as part of the biosynthesis of pyridoxal 5'-phosphate. The resulting ammonia molecule is channeled to the active site of PdxS. This Staphylococcus haemolyticus (strain JCSC1435) protein is Pyridoxal 5'-phosphate synthase subunit PdxT.